Reading from the N-terminus, the 251-residue chain is Duodenase-1 (251 aa).

An N-terminal signal peptide occupies residues 1-17; that stretch reads MVLLLLLVALLSPTGEA. Residues 18–19 constitute a propeptide that is removed on maturation; that stretch reads GK. The 223-residue stretch at 20–242 folds into the Peptidase S1 domain; that stretch reads IIGGHEAKPH…SFLSWIHSTM (223 aa). A disulfide bridge connects residues cysteine 48 and cysteine 64. The active-site Charge relay system is the histidine 63. A glycan (N-linked (GlcNAc...) asparagine) is linked at asparagine 70. The active-site Charge relay system is the aspartate 107. 2 cysteine pairs are disulfide-bonded: cysteine 141–cysteine 207 and cysteine 172–cysteine 186. Catalysis depends on serine 201, which acts as the Charge relay system.

Belongs to the peptidase S1 family. Monomer.

Protease which has both trypsin-like and chymotrypsin-like activities. Shows a preferential cleavage after Lys, Arg, Tyr, Phe, and Leu residues. The chain is Duodenase-1 (BDMD1) from Bos taurus (Bovine).